The sequence spans 189 residues: Putative manganese efflux pump MntP (189 aa).

The next 6 membrane-spanning stretches (helical) occupy residues 3–23, 41–61, 65–85, 106–128, 141–161, and 168–188; these read PVSL…AAIG, IIFG…GQAA, VADW…LHMI, WILA…GLAF, GLAT…LGAV, and MVGG…HLSA.

The protein belongs to the MntP (TC 9.B.29) family.

The protein resides in the cell inner membrane. In terms of biological role, probably functions as a manganese efflux pump. In Pseudomonas aeruginosa (strain LESB58), this protein is Putative manganese efflux pump MntP.